The chain runs to 159 residues: ATP synthase subunit b (159 aa).

Residues 7–27 (VIFMTIINFCILVAILKHFFW) traverse the membrane as a helical segment.

Belongs to the ATPase B chain family. As to quaternary structure, F-type ATPases have 2 components, F(1) - the catalytic core - and F(0) - the membrane proton channel. F(1) has five subunits: alpha(3), beta(3), gamma(1), delta(1), epsilon(1). F(0) has three main subunits: a(1), b(2) and c(10-14). The alpha and beta chains form an alternating ring which encloses part of the gamma chain. F(1) is attached to F(0) by a central stalk formed by the gamma and epsilon chains, while a peripheral stalk is formed by the delta and b chains.

The protein localises to the cell membrane. Functionally, f(1)F(0) ATP synthase produces ATP from ADP in the presence of a proton or sodium gradient. F-type ATPases consist of two structural domains, F(1) containing the extramembraneous catalytic core and F(0) containing the membrane proton channel, linked together by a central stalk and a peripheral stalk. During catalysis, ATP synthesis in the catalytic domain of F(1) is coupled via a rotary mechanism of the central stalk subunits to proton translocation. Component of the F(0) channel, it forms part of the peripheral stalk, linking F(1) to F(0). This is ATP synthase subunit b from Clostridium botulinum (strain Alaska E43 / Type E3).